A 216-amino-acid polypeptide reads, in one-letter code: Putative F-box protein At2g03610 (216 aa).

The F-box domain maps to 19–69 (NQDWSKLCPDLLRPILESLSSIDFHRAKTVCSDWYSVWKTCKGYDSKWNQN).

This Arabidopsis thaliana (Mouse-ear cress) protein is Putative F-box protein At2g03610.